A 284-amino-acid chain; its full sequence is Nucleotide-binding protein VSAL_I0495 (284 aa).

ATP is bound at residue 8–15 (GNSGAGKS). 56–59 (DIRN) is a binding site for GTP.

It belongs to the RapZ-like family.

Its function is as follows. Displays ATPase and GTPase activities. This is Nucleotide-binding protein VSAL_I0495 from Aliivibrio salmonicida (strain LFI1238) (Vibrio salmonicida (strain LFI1238)).